Reading from the N-terminus, the 213-residue chain is Orotate phosphoribosyltransferase (213 aa).

Lys26 contacts 5-phospho-alpha-D-ribose 1-diphosphate. Phe34–Phe35 contributes to the orotate binding site. Residues Tyr72–Lys73, Arg99, Lys100, Lys103, His105, and Asp124–Ser132 each bind 5-phospho-alpha-D-ribose 1-diphosphate. Residues Thr128 and Arg156 each contribute to the orotate site.

This sequence belongs to the purine/pyrimidine phosphoribosyltransferase family. PyrE subfamily. In terms of assembly, homodimer. Mg(2+) serves as cofactor.

The enzyme catalyses orotidine 5'-phosphate + diphosphate = orotate + 5-phospho-alpha-D-ribose 1-diphosphate. It functions in the pathway pyrimidine metabolism; UMP biosynthesis via de novo pathway; UMP from orotate: step 1/2. In terms of biological role, catalyzes the transfer of a ribosyl phosphate group from 5-phosphoribose 1-diphosphate to orotate, leading to the formation of orotidine monophosphate (OMP). The protein is Orotate phosphoribosyltransferase of Methylococcus capsulatus (strain ATCC 33009 / NCIMB 11132 / Bath).